A 264-amino-acid polypeptide reads, in one-letter code: Thiazole synthase (264 aa).

Lys-106 (schiff-base intermediate with DXP) is an active-site residue. 1-deoxy-D-xylulose 5-phosphate is bound by residues Gly-167, 193–194 (AG), and 215–216 (NS).

The protein belongs to the ThiG family. In terms of assembly, homotetramer. Forms heterodimers with either ThiH or ThiS.

Its subcellular location is the cytoplasm. The catalysed reaction is [ThiS sulfur-carrier protein]-C-terminal-Gly-aminoethanethioate + 2-iminoacetate + 1-deoxy-D-xylulose 5-phosphate = [ThiS sulfur-carrier protein]-C-terminal Gly-Gly + 2-[(2R,5Z)-2-carboxy-4-methylthiazol-5(2H)-ylidene]ethyl phosphate + 2 H2O + H(+). It functions in the pathway cofactor biosynthesis; thiamine diphosphate biosynthesis. Catalyzes the rearrangement of 1-deoxy-D-xylulose 5-phosphate (DXP) to produce the thiazole phosphate moiety of thiamine. Sulfur is provided by the thiocarboxylate moiety of the carrier protein ThiS. In vitro, sulfur can be provided by H(2)S. This is Thiazole synthase from Pseudomonas savastanoi pv. phaseolicola (strain 1448A / Race 6) (Pseudomonas syringae pv. phaseolicola (strain 1448A / Race 6)).